The primary structure comprises 138 residues: Acidic phospholipase A2 2 (138 aa).

Residues 1-16 (MRTLWIVAVLLLGVEG) form the signal peptide. 7 disulfide bridges follow: Cys-42–Cys-131, Cys-44–Cys-60, Cys-59–Cys-111, Cys-65–Cys-138, Cys-66–Cys-104, Cys-73–Cys-97, and Cys-91–Cys-102. 3 residues coordinate Ca(2+): Tyr-43, Gly-45, and Gly-47. His-63 is a catalytic residue. Residue Asp-64 coordinates Ca(2+). Asp-105 is an active-site residue.

The protein belongs to the phospholipase A2 family. Group II subfamily. D49 sub-subfamily. The cofactor is Ca(2+). As to expression, expressed by the venom gland.

The protein resides in the secreted. It carries out the reaction a 1,2-diacyl-sn-glycero-3-phosphocholine + H2O = a 1-acyl-sn-glycero-3-phosphocholine + a fatty acid + H(+). Its function is as follows. Snake venom phospholipase A2 (PLA2) that displays edema-inducing activities, exhibits indirect hemolytic activity, and inhibits ADP-induced platelet aggregation. PLA2 catalyzes the calcium-dependent hydrolysis of the 2-acyl groups in 3-sn-phosphoglycerides. In Protobothrops mucrosquamatus (Taiwan habu), this protein is Acidic phospholipase A2 2.